The sequence spans 39 residues: Cytochrome b559 subunit beta (39 aa).

A helical membrane pass occupies residues 14–30; that stretch reads WLAVHGLAVPTVFFLGS. Histidine 18 is a heme binding site.

It belongs to the PsbE/PsbF family. Heterodimer of an alpha subunit and a beta subunit. PSII is composed of 1 copy each of membrane proteins PsbA, PsbB, PsbC, PsbD, PsbE, PsbF, PsbH, PsbI, PsbJ, PsbK, PsbL, PsbM, PsbT, PsbX, PsbY, PsbZ, Psb30/Ycf12, at least 3 peripheral proteins of the oxygen-evolving complex and a large number of cofactors. It forms dimeric complexes. Heme b is required as a cofactor.

It is found in the plastid. Its subcellular location is the chloroplast thylakoid membrane. Functionally, this b-type cytochrome is tightly associated with the reaction center of photosystem II (PSII). PSII is a light-driven water:plastoquinone oxidoreductase that uses light energy to abstract electrons from H(2)O, generating O(2) and a proton gradient subsequently used for ATP formation. It consists of a core antenna complex that captures photons, and an electron transfer chain that converts photonic excitation into a charge separation. The sequence is that of Cytochrome b559 subunit beta from Nicotiana glutinosa (Tobacco).